Reading from the N-terminus, the 432-residue chain is Serine/threonine-protein kinase CDG1 (432 aa).

2 S-palmitoyl cysteine lipidation sites follow: cysteine 4 and cysteine 6. Residues 15-24 (LKDKSHKRSI) show a composition bias toward basic residues. Residues 15 to 47 (LKDKSHKRSIRNQTSSSSAQPAGTAKEVDSSSS) form a disordered region. Residues 25–35 (RNQTSSSSAQP) show a composition bias toward polar residues. 2 positions are modified to phosphoserine: serine 44 and serine 47. Positions 74 to 354 (FRNESLIGRG…SQVVECLKYI (281 aa)) constitute a Protein kinase domain. Residues 80 to 88 (IGRGGFGTV) and lysine 102 contribute to the ATP site. Tyrosine 147 carries the phosphotyrosine modification. Residue aspartate 200 is the Proton acceptor of the active site. A phosphoserine mark is found at serine 204 and serine 234. Threonine 235 and threonine 240 each carry phosphothreonine. Tyrosine 248 carries the post-translational modification Phosphotyrosine.

This sequence belongs to the protein kinase superfamily. Ser/Thr protein kinase family. As to quaternary structure, interacts with BSU1, BSL1 and BRI1. In terms of processing, phosphorylated at Ser-44, Ser-47 and Ser-234 by BRI1. In terms of tissue distribution, expressed at high levels in the stamen and pollen grains. Expressed at a very low level in vegetative tissues.

It is found in the cell membrane. It catalyses the reaction L-seryl-[protein] + ATP = O-phospho-L-seryl-[protein] + ADP + H(+). The catalysed reaction is L-threonyl-[protein] + ATP = O-phospho-L-threonyl-[protein] + ADP + H(+). With respect to regulation, activated by phosphorylation at Ser-234. Its function is as follows. Serine/threonine-protein kinase involved in the positive regulation of brassinosteroid (BR) signaling and plant growth. Mediates BR signal transduction from BRI1 receptor kinase to BSU1 phosphatase. After activation by phosphorylation at Ser-234 by BRI1, CDG1 phosphorylates BSU1 at 'Ser-764' in the phosphatase domain, increasing the ability of BSU1 to inactivate the negative regulator of BR signaling ASK7/BIN2 by dephosphorylation at 'Tyr-200'. The full kinase activity of CDG1 is required for its biological function. In Arabidopsis thaliana (Mouse-ear cress), this protein is Serine/threonine-protein kinase CDG1.